A 319-amino-acid chain; its full sequence is Malate dehydrogenase (319 aa).

NAD(+) contacts are provided by residues 7 to 13 and Asp-34; that span reads GAAGGIG. Positions 81 and 87 each coordinate substrate. Residues Asn-94 and 117–119 each bind NAD(+); that span reads ITN. Residues Asn-119 and Arg-153 each contribute to the substrate site. Residue His-177 is the Proton acceptor of the active site. Met-227 serves as a coordination point for NAD(+).

Belongs to the LDH/MDH superfamily. MDH type 1 family. As to quaternary structure, homodimer.

It carries out the reaction (S)-malate + NAD(+) = oxaloacetate + NADH + H(+). Catalyzes the reversible oxidation of malate to oxaloacetate. This Psychromonas ingrahamii (strain DSM 17664 / CCUG 51855 / 37) protein is Malate dehydrogenase.